The chain runs to 267 residues: Oxidoreductase ordB (267 aa).

It belongs to the avfA family.

The protein operates within mycotoxin biosynthesis. Functionally, oxidoreductase; part of the fragmented gene cluster that mediates the biosynthesis of dothistromin (DOTH), a polyketide toxin very similar in structure to the aflatoxin precursor, versicolorin B. The first step of the pathway is the conversion of acetate to norsolorinic acid (NOR) and requires the fatty acid synthase subunits hexA and hexB, as well as the polyketide synthase pksA. PksA combines a hexanoyl starter unit and 7 malonyl-CoA extender units to synthesize the precursor NOR. The hexanoyl starter unit is provided to the acyl-carrier protein (ACP) domain by the fungal fatty acid synthase hexA/hexB. The second step is the conversion of NOR to averantin (AVN) and requires the norsolorinic acid ketoreductase nor1, which catalyzes the dehydration of norsolorinic acid to form (1'S)-averantin. The cytochrome P450 monooxygenase avnA then catalyzes the hydroxylation of AVN to 5'hydroxyaverantin (HAVN). The next step is performed by adhA that transforms HAVN to averufin (AVF). Averufin might then be converted to hydroxyversicolorone by cypX and avfA. Hydroxyversicolorone is further converted versiconal hemiacetal acetate (VHA) by moxY. VHA is then the substrate for the versiconal hemiacetal acetate esterase est1 to yield versiconal (VAL). Versicolorin B synthase vbsA then converts VAL to versicolorin B (VERB) by closing the bisfuran ring. Then, the activity of the versicolorin B desaturase verB leads to versicolorin A (VERA). DotB, a predicted chloroperoxidase, may perform epoxidation of the A-ring of VERA. Alternatively, a cytochrome P450, such as cypX or avnA could catalyze this step. It is also possible that another, uncharacterized, cytochrome P450 enzyme is responsible for this step. Opening of the epoxide could potentially be achieved by the epoxide hydrolase epoA. However, epoA seems not to be required for DOTH biosynthesis, but other epoxide hydrolases may have the ability to complement this hydrolysis. Alternatively, opening of the epoxide ring could be achieved non-enzymatically. The next step is the deoxygenation of ring A to yield the 5,8-dihydroxyanthraquinone which is most likely catalyzed by the NADPH dehydrogenase encoded by ver1. The last stages of DOTH biosynthesis are proposed to involve hydroxylation of the bisfuran. OrdB and norB might have oxidative roles here. An alternative possibility is that cytochrome P450 monoogenases such as avnA and cypX might perform these steps in addition to previously proposed steps. This chain is Oxidoreductase ordB, found in Dothistroma septosporum (strain NZE10 / CBS 128990) (Red band needle blight fungus).